The sequence spans 267 residues: Nus factor SuhB (267 aa).

Mg(2+) contacts are provided by Glu-67, Asp-84, and Leu-86. Glu-67 contributes to the substrate binding site. Substrate is bound by residues 86-89 (LDGT), Arg-183, and Asp-212.

The protein belongs to the inositol monophosphatase superfamily. Homodimer. The rRNA transcription and antitermination complex (rrnTAC) consists of RNA polymerase (RNAP), NusA, NusB, NusE (rpsJ), NusG, SubB, ribosomal protein S4, DNA and precursor rRNA; S4 is more flexible than other subunits. It depends on Mg(2+) as a cofactor.

The protein localises to the cytoplasm. The enzyme catalyses a myo-inositol phosphate + H2O = myo-inositol + phosphate. In terms of biological role, part of the processive rRNA transcription and antitermination complex (rrnTAC). The complex forms an RNA-chaperone ring around the RNA exit tunnel of RNA polymerase (RNAP). It supports rapid transcription and antitermination of rRNA operons, cotranscriptional rRNA folding, and annealing of distal rRNA regions to allow correct ribosome biogenesis. This subunit may play a central role in organizing the structure. This Haemophilus influenzae (strain ATCC 51907 / DSM 11121 / KW20 / Rd) protein is Nus factor SuhB (suhB).